The sequence spans 271 residues: Orotidine 5'-phosphate decarboxylase (271 aa).

The active-site Proton donor is Lys-97.

This sequence belongs to the OMP decarboxylase family. Type 2 subfamily.

The catalysed reaction is orotidine 5'-phosphate + H(+) = UMP + CO2. The protein operates within pyrimidine metabolism; UMP biosynthesis via de novo pathway; UMP from orotate: step 2/2. The polypeptide is Orotidine 5'-phosphate decarboxylase (Leptospira borgpetersenii serovar Hardjo-bovis (strain L550)).